Reading from the N-terminus, the 150-residue chain is Large ribosomal subunit protein bL9 (150 aa).

The protein belongs to the bacterial ribosomal protein bL9 family.

In terms of biological role, binds to the 23S rRNA. The sequence is that of Large ribosomal subunit protein bL9 from Stenotrophomonas maltophilia (strain R551-3).